The sequence spans 250 residues: Endomucin (250 aa).

The first 20 residues, 1-20, serve as a signal peptide directing secretion; sequence MRLLQVTALFFLLSNSLCRG. Composition is skewed to low complexity over residues 24–38 and 45–60; these read KALTETSTTKASATT and TNKSTGGTPPKGTTNS. 2 disordered regions span residues 24-83 and 105-153; these read KALT…ETTT and NAVS…LTTA. N-linked (GlcNAc...) asparagine glycosylation is found at Asn-46, Asn-115, and Asn-119. Polar residues-rich tracts occupy residues 105-135 and 143-153; these read NAVSTLSSPQNKTENQSSIRTTEISGTNQLP and TETPSASLTTA. A helical membrane pass occupies residues 180–200; that stretch reads VILPVVIALIVITVLVFTLVG. Residues 210–250 form a disordered region; that stretch reads PGTPESGNDQPQSDKESVKLLTVKTISHESGEHSAQGKAKN. Residue Ser-226 is modified to Phosphoserine.

Highly O-glycosylated. Sialic acid-rich glycoprotein.

The protein resides in the membrane. In terms of biological role, endothelial sialomucin, also called endomucin or mucin-like sialoglycoprotein, which interferes with the assembly of focal adhesion complexes and inhibits interaction between cells and the extracellular matrix. The polypeptide is Endomucin (Emcn) (Rattus norvegicus (Rat)).